We begin with the raw amino-acid sequence, 255 residues long: Triosephosphate isomerase (255 aa).

9-11 (NWK) is a substrate binding site. His-95 serves as the catalytic Electrophile. The active-site Proton acceptor is Glu-167. Substrate is bound by residues Gly-173, Ser-212, and 233–234 (GG).

The protein belongs to the triosephosphate isomerase family. In terms of assembly, homodimer.

It localises to the cytoplasm. It catalyses the reaction D-glyceraldehyde 3-phosphate = dihydroxyacetone phosphate. The protein operates within carbohydrate biosynthesis; gluconeogenesis. It participates in carbohydrate degradation; glycolysis; D-glyceraldehyde 3-phosphate from glycerone phosphate: step 1/1. Its function is as follows. Involved in the gluconeogenesis. Catalyzes stereospecifically the conversion of dihydroxyacetone phosphate (DHAP) to D-glyceraldehyde-3-phosphate (G3P). This chain is Triosephosphate isomerase, found in Yersinia pseudotuberculosis serotype O:1b (strain IP 31758).